A 295-amino-acid chain; its full sequence is Phosphatidylserine decarboxylase proenzyme (295 aa).

Active-site charge relay system; for autoendoproteolytic cleavage activity residues include D113, H169, and S256. The active-site Schiff-base intermediate with substrate; via pyruvic acid; for decarboxylase activity is the S256. S256 is modified (pyruvic acid (Ser); by autocatalysis).

This sequence belongs to the phosphatidylserine decarboxylase family. PSD-B subfamily. Prokaryotic type II sub-subfamily. Heterodimer of a large membrane-associated beta subunit and a small pyruvoyl-containing alpha subunit. It depends on pyruvate as a cofactor. Is synthesized initially as an inactive proenzyme. Formation of the active enzyme involves a self-maturation process in which the active site pyruvoyl group is generated from an internal serine residue via an autocatalytic post-translational modification. Two non-identical subunits are generated from the proenzyme in this reaction, and the pyruvate is formed at the N-terminus of the alpha chain, which is derived from the carboxyl end of the proenzyme. The autoendoproteolytic cleavage occurs by a canonical serine protease mechanism, in which the side chain hydroxyl group of the serine supplies its oxygen atom to form the C-terminus of the beta chain, while the remainder of the serine residue undergoes an oxidative deamination to produce ammonia and the pyruvoyl prosthetic group on the alpha chain. During this reaction, the Ser that is part of the protease active site of the proenzyme becomes the pyruvoyl prosthetic group, which constitutes an essential element of the active site of the mature decarboxylase.

Its subcellular location is the cell membrane. The catalysed reaction is a 1,2-diacyl-sn-glycero-3-phospho-L-serine + H(+) = a 1,2-diacyl-sn-glycero-3-phosphoethanolamine + CO2. Its pathway is phospholipid metabolism; phosphatidylethanolamine biosynthesis; phosphatidylethanolamine from CDP-diacylglycerol: step 2/2. In terms of biological role, catalyzes the formation of phosphatidylethanolamine (PtdEtn) from phosphatidylserine (PtdSer). The chain is Phosphatidylserine decarboxylase proenzyme from Clostridium botulinum (strain 657 / Type Ba4).